The sequence spans 174 residues: Large ribosomal subunit protein bL12cy (174 aa).

Residues 1 to 45 (MASTTFSSAFSILSLPSSSPSPPPWAPRTLPVANRRRRAAAVAST) constitute a chloroplast transit peptide.

Belongs to the bacterial ribosomal protein bL12 family.

The protein resides in the plastid. It localises to the chloroplast. In Secale cereale (Rye), this protein is Large ribosomal subunit protein bL12cy (RPL12-2).